Here is a 154-residue protein sequence, read N- to C-terminus: Urease accessory protein UreE (154 aa).

The interval 134–154 (PESGAYGKSGHNHGHSHSHED) is disordered. Residues 143-154 (GHNHGHSHSHED) show a composition bias toward basic residues.

This sequence belongs to the UreE family.

It is found in the cytoplasm. In terms of biological role, involved in urease metallocenter assembly. Binds nickel. Probably functions as a nickel donor during metallocenter assembly. The chain is Urease accessory protein UreE from Alteromonas mediterranea (strain DSM 17117 / CIP 110805 / LMG 28347 / Deep ecotype).